The chain runs to 514 residues: Carboxysome shell carbonic anhydrase (514 aa).

Residues 1–144 form an N-terminal domain region; it reads MNTRNTRSKQ…LTAATEQFSR (144 aa). The catalytic domain stretch occupies residues 151-397; the sequence is DDSASAIGFF…GRYPPNDIGH (247 aa). C173 provides a ligand contact to Zn(2+). Residue D175 is the Proton acceptor of the active site. Zn(2+) is bound by residues H242 and C253. The interval 398 to 514 is C-terminal domain; the sequence is AERYISVGDG…GSPIEEVASA (117 aa).

This sequence belongs to the beta-class carbonic anhydrase family. CsoSCA subfamily. In terms of assembly, homodimer, may form filaments. It depends on Zn(2+) as a cofactor.

Its subcellular location is the carboxysome. The enzyme catalyses hydrogencarbonate + H(+) = CO2 + H2O. Carbonic anhydrase activity is inhibited by ethoxyzolamide, dithiothreitol, cyanide, and divalent metal chelators dipicolinic acid and nitrilotriacetic acid. Its function is as follows. Reversible hydration of carbon dioxide. Essential for chemolithotrophic carbon dioxide fixation, supplies CO(2) to RuBisCO (ribulose bisphosphate carboxylase, cbbL-cbbS) in the carboxysome. There are estimated to be 40 CsoSCA dimers per carboxysome. Unlike beta-carboxysomes, alpha-carboxysomes (Cb) can form without cargo protein. CsoS2 is essential for Cb formation and is also capable of targeting foreign proteins to the Cb. The Cb shell assembles with the aid of CsoS2; CsoS1A, CsoS1B and CsoS1C form the majority of the shell while CsoS4A and CsoS4B form vertices. CsoS1D forms pseudohexamers that probably control metabolite flux into and out of the shell. In Halothiobacillus neapolitanus (strain ATCC 23641 / c2) (Thiobacillus neapolitanus), this protein is Carboxysome shell carbonic anhydrase.